The chain runs to 262 residues: 3-deoxy-manno-octulosonate cytidylyltransferase (262 aa).

It belongs to the KdsB family.

Its subcellular location is the cytoplasm. The catalysed reaction is 3-deoxy-alpha-D-manno-oct-2-ulosonate + CTP = CMP-3-deoxy-beta-D-manno-octulosonate + diphosphate. It participates in nucleotide-sugar biosynthesis; CMP-3-deoxy-D-manno-octulosonate biosynthesis; CMP-3-deoxy-D-manno-octulosonate from 3-deoxy-D-manno-octulosonate and CTP: step 1/1. It functions in the pathway bacterial outer membrane biogenesis; lipopolysaccharide biosynthesis. In terms of biological role, activates KDO (a required 8-carbon sugar) for incorporation into bacterial lipopolysaccharide in Gram-negative bacteria. This is 3-deoxy-manno-octulosonate cytidylyltransferase from Acidovorax ebreus (strain TPSY) (Diaphorobacter sp. (strain TPSY)).